The following is a 466-amino-acid chain: Ribosomal protein uS12 methylthiotransferase RimO (466 aa).

The MTTase N-terminal domain maps to 15–125 (PKVGFVSLGC…VMEAVHAALP (111 aa)). [4Fe-4S] cluster contacts are provided by C24, C60, C89, C156, C160, and C163. One can recognise a Radical SAM core domain in the interval 142–380 (LTPRHYAYLK…AKQAEISALR (239 aa)). One can recognise a TRAM domain in the interval 382–450 (EAKIGSVQQC…EHDLFGDALP (69 aa)).

The protein belongs to the methylthiotransferase family. RimO subfamily. The cofactor is [4Fe-4S] cluster.

The protein localises to the cytoplasm. It carries out the reaction L-aspartate(89)-[ribosomal protein uS12]-hydrogen + (sulfur carrier)-SH + AH2 + 2 S-adenosyl-L-methionine = 3-methylsulfanyl-L-aspartate(89)-[ribosomal protein uS12]-hydrogen + (sulfur carrier)-H + 5'-deoxyadenosine + L-methionine + A + S-adenosyl-L-homocysteine + 2 H(+). In terms of biological role, catalyzes the methylthiolation of an aspartic acid residue of ribosomal protein uS12. The protein is Ribosomal protein uS12 methylthiotransferase RimO of Xanthomonas oryzae pv. oryzae (strain MAFF 311018).